The chain runs to 330 residues: Protein LEG1 homolog (330 aa).

Positions 1–20 (MAFLPSWVCVLVGSFSASLA) are cleaved as a signal peptide. Residues N24 and N69 are each glycosylated (N-linked (GlcNAc...) asparagine).

It belongs to the LEG1 family. In terms of tissue distribution, detected in saliva and in hypomineralized dental enamel (at protein level).

It is found in the secreted. In terms of biological role, may be involved in early liver development. This is Protein LEG1 homolog from Homo sapiens (Human).